Reading from the N-terminus, the 870-residue chain is S-linalool synthase (870 aa).

Asp547, Asp551, Asn689, Ser693, and Glu697 together coordinate Mg(2+). Positions 547–551 (DDFFD) match the DDXXD motif motif.

Belongs to the terpene synthase family. Mg(2+) serves as cofactor. The cofactor is Mn(2+). Highly expressed in cells of the transmitting tract of the stigma and style and in the epidermal cells of petals, as well as in stamens.

The enzyme catalyses (2E)-geranyl diphosphate + H2O = (S)-linalool + diphosphate. Functionally, involved in the biosynthesis of the acyclic monoterpene S-linalool, a major component of the strong sweet scent of the C.breweri flowers. The sequence is that of S-linalool synthase (LIS) from Clarkia breweri (Fairy fans).